The primary structure comprises 1186 residues: DNA-directed RNA polymerase subunit beta (1186 aa).

Positions 1149-1186 (KEEDDDPSTSSDDLGFNIGARPDAAAKEDQVAEEPEFQ) are disordered.

Belongs to the RNA polymerase beta chain family. The RNAP catalytic core consists of 2 alpha, 1 beta, 1 beta' and 1 omega subunit. When a sigma factor is associated with the core the holoenzyme is formed, which can initiate transcription.

It catalyses the reaction RNA(n) + a ribonucleoside 5'-triphosphate = RNA(n+1) + diphosphate. DNA-dependent RNA polymerase catalyzes the transcription of DNA into RNA using the four ribonucleoside triphosphates as substrates. In Bifidobacterium adolescentis (strain ATCC 15703 / DSM 20083 / NCTC 11814 / E194a), this protein is DNA-directed RNA polymerase subunit beta.